An 84-amino-acid chain; its full sequence is Anaphase-promoting complex subunit 11 (84 aa).

Positions 23, 26, 34, 37, 44, 51, 53, 56, 58, 59, 73, and 76 each coordinate Zn(2+). The RING-type zinc-finger motif lies at 34 to 77 (CPDCKVPGDDCPLVWGQCSHCFHMHCILKWLHAQQVQQHCPMCR).

This sequence belongs to the RING-box family. As to quaternary structure, the mammalian APC/C is composed at least of 14 distinct subunits ANAPC1, ANAPC2, CDC27/APC3, ANAPC4, ANAPC5, CDC16/APC6, ANAPC7, CDC23/APC8, ANAPC10, ANAPC11, CDC26/APC12, ANAPC13, ANAPC15 and ANAPC16 that assemble into a complex of at least 19 chains with a combined molecular mass of around 1.2 MDa; APC/C interacts with FZR1 and FBXO5. Interacts with the cullin domain of ANAPC2. Interacts with UBE2D2. In terms of processing, auto-ubiquitinated. As to expression, expressed at high levels in skeletal muscle and heart; in moderate levels in brain, kidney, and liver; and at low levels in colon, thymus, spleen, small intestine, placenta, lung and peripheral blood leukocyte.

Its subcellular location is the cytoplasm. It is found in the nucleus. It participates in protein modification; protein ubiquitination. Its function is as follows. Together with the cullin protein ANAPC2, constitutes the catalytic component of the anaphase promoting complex/cyclosome (APC/C), a cell cycle-regulated E3 ubiquitin ligase that controls progression through mitosis and the G1 phase of the cell cycle. The APC/C complex acts by mediating ubiquitination and subsequent degradation of target proteins: it mainly mediates the formation of 'Lys-11'-linked polyubiquitin chains and, to a lower extent, the formation of 'Lys-48'- and 'Lys-63'-linked polyubiquitin chains. The APC/C complex catalyzes assembly of branched 'Lys-11'-/'Lys-48'-linked branched ubiquitin chains on target proteins. May recruit the E2 ubiquitin-conjugating enzymes to the complex. In Homo sapiens (Human), this protein is Anaphase-promoting complex subunit 11 (ANAPC11).